The sequence spans 167 residues: Pathogenesis-related protein PRMS (167 aa).

Positions 1–27 (MEASNKLAVLLLWLVMAAATAVHPSYS) are cleaved as a signal peptide. In terms of domain architecture, SCP spans 37-155 (PQNSARAAVG…NRGVFIICNY (119 aa)). Intrachain disulfides connect Cys-71–Cys-143, Cys-116–Cys-122, and Cys-138–Cys-153.

It belongs to the CRISP family.

Its function is as follows. Probably involved in the defense reaction of plants against pathogens. In Zea mays (Maize), this protein is Pathogenesis-related protein PRMS (PRMS).